The sequence spans 224 residues: Orotate phosphoribosyltransferase (224 aa).

Position 29 (Lys29) interacts with 5-phospho-alpha-D-ribose 1-diphosphate. Residue 37 to 38 (FF) coordinates orotate. Residues 75–76 (YK), Arg105, Lys106, Lys109, His111, and 130–138 (DDVITAGTS) each bind 5-phospho-alpha-D-ribose 1-diphosphate. 2 residues coordinate orotate: Thr134 and Arg162.

It belongs to the purine/pyrimidine phosphoribosyltransferase family. PyrE subfamily. In terms of assembly, homodimer. Requires Mg(2+) as cofactor.

It carries out the reaction orotidine 5'-phosphate + diphosphate = orotate + 5-phospho-alpha-D-ribose 1-diphosphate. Its pathway is pyrimidine metabolism; UMP biosynthesis via de novo pathway; UMP from orotate: step 1/2. Catalyzes the transfer of a ribosyl phosphate group from 5-phosphoribose 1-diphosphate to orotate, leading to the formation of orotidine monophosphate (OMP). In Bordetella bronchiseptica (strain ATCC BAA-588 / NCTC 13252 / RB50) (Alcaligenes bronchisepticus), this protein is Orotate phosphoribosyltransferase.